The chain runs to 259 residues: uncharacterized protein (259 aa).

The protein belongs to the ParA family.

This is an uncharacterized protein from Methanocaldococcus jannaschii (strain ATCC 43067 / DSM 2661 / JAL-1 / JCM 10045 / NBRC 100440) (Methanococcus jannaschii).